Consider the following 353-residue polypeptide: Photosystem II D2 protein (353 aa).

N-acetylthreonine is present on threonine 2. Position 2 is a phosphothreonine (threonine 2). Residues 41 to 61 (CAYFALGGWFTGTTFVTSWYT) traverse the membrane as a helical segment. Histidine 118 contributes to the chlorophyll a binding site. Residues 125–141 (GFMLRQFELARSVQLRP) traverse the membrane as a helical segment. The pheophytin a site is built by glutamine 130 and asparagine 143. A helical membrane pass occupies residues 153–166 (VFVSVFLIYPLGQS). Chlorophyll a is bound at residue histidine 198. The helical transmembrane segment at 208–228 (AALLCAIHGATVENLYFEDGD) threads the bilayer. Residues histidine 215 and phenylalanine 262 each coordinate a plastoquinone. Histidine 215 contributes to the Fe cation binding site. Histidine 269 contacts Fe cation. The chain crosses the membrane as a helical span at residues 279 to 295 (GLWMSALGVVGLALNLR).

This sequence belongs to the reaction center PufL/M/PsbA/D family. In terms of assembly, PSII is composed of 1 copy each of membrane proteins PsbA, PsbB, PsbC, PsbD, PsbE, PsbF, PsbH, PsbI, PsbJ, PsbK, PsbL, PsbM, PsbT, PsbX, PsbY, PsbZ, Psb30/Ycf12, at least 3 peripheral proteins of the oxygen-evolving complex and a large number of cofactors. It forms dimeric complexes. The D1/D2 heterodimer binds P680, chlorophylls that are the primary electron donor of PSII, and subsequent electron acceptors. It shares a non-heme iron and each subunit binds pheophytin, quinone, additional chlorophylls, carotenoids and lipids. There is also a Cl(-1) ion associated with D1 and D2, which is required for oxygen evolution. The PSII complex binds additional chlorophylls, carotenoids and specific lipids. is required as a cofactor.

The protein resides in the plastid. The protein localises to the chloroplast thylakoid membrane. The catalysed reaction is 2 a plastoquinone + 4 hnu + 2 H2O = 2 a plastoquinol + O2. In terms of biological role, photosystem II (PSII) is a light-driven water:plastoquinone oxidoreductase that uses light energy to abstract electrons from H(2)O, generating O(2) and a proton gradient subsequently used for ATP formation. It consists of a core antenna complex that captures photons, and an electron transfer chain that converts photonic excitation into a charge separation. The D1/D2 (PsbA/PsbD) reaction center heterodimer binds P680, the primary electron donor of PSII as well as several subsequent electron acceptors. D2 is needed for assembly of a stable PSII complex. This is Photosystem II D2 protein from Panax ginseng (Korean ginseng).